The sequence spans 398 residues: 1-deoxy-D-xylulose 5-phosphate reductoisomerase (398 aa).

NADPH contacts are provided by Thr-13, Gly-14, Ser-15, Ile-16, Arg-40, and Asn-127. Lys-128 serves as a coordination point for 1-deoxy-D-xylulose 5-phosphate. Residue Glu-129 coordinates NADPH. Asp-153 lines the Mn(2+) pocket. The 1-deoxy-D-xylulose 5-phosphate site is built by Ser-154, Glu-155, Ser-188, and His-211. A Mn(2+)-binding site is contributed by Glu-155. Position 217 (Gly-217) interacts with NADPH. Residues Ser-224, Asn-229, Lys-230, and Glu-233 each contribute to the 1-deoxy-D-xylulose 5-phosphate site. Glu-233 contributes to the Mn(2+) binding site.

This sequence belongs to the DXR family. Mg(2+) is required as a cofactor. It depends on Mn(2+) as a cofactor.

The catalysed reaction is 2-C-methyl-D-erythritol 4-phosphate + NADP(+) = 1-deoxy-D-xylulose 5-phosphate + NADPH + H(+). It functions in the pathway isoprenoid biosynthesis; isopentenyl diphosphate biosynthesis via DXP pathway; isopentenyl diphosphate from 1-deoxy-D-xylulose 5-phosphate: step 1/6. Catalyzes the NADPH-dependent rearrangement and reduction of 1-deoxy-D-xylulose-5-phosphate (DXP) to 2-C-methyl-D-erythritol 4-phosphate (MEP). This chain is 1-deoxy-D-xylulose 5-phosphate reductoisomerase, found in Cellvibrio japonicus (strain Ueda107) (Pseudomonas fluorescens subsp. cellulosa).